Reading from the N-terminus, the 705-residue chain is Fatty acid oxidation complex subunit alpha (705 aa).

The enoyl-CoA hydratase stretch occupies residues 1–188 (MGKTFNLTRR…KMGLVNDVVP (188 aa)). The 3-hydroxyacyl-CoA dehydrogenase stretch occupies residues 308-705 (RKVKKAVILG…AMAAEKARFF (398 aa)).

The protein in the N-terminal section; belongs to the enoyl-CoA hydratase/isomerase family. This sequence in the central section; belongs to the 3-hydroxyacyl-CoA dehydrogenase family. Heterotetramer of two alpha chains (FadJ) and two beta chains (FadI).

Its subcellular location is the cytoplasm. The enzyme catalyses a (3S)-3-hydroxyacyl-CoA = a (2E)-enoyl-CoA + H2O. The catalysed reaction is a 4-saturated-(3S)-3-hydroxyacyl-CoA = a (3E)-enoyl-CoA + H2O. It catalyses the reaction a (3S)-3-hydroxyacyl-CoA + NAD(+) = a 3-oxoacyl-CoA + NADH + H(+). It carries out the reaction (3S)-3-hydroxybutanoyl-CoA = (3R)-3-hydroxybutanoyl-CoA. It functions in the pathway lipid metabolism; fatty acid beta-oxidation. Functionally, catalyzes the formation of a hydroxyacyl-CoA by addition of water on enoyl-CoA. Also exhibits 3-hydroxyacyl-CoA epimerase and 3-hydroxyacyl-CoA dehydrogenase activities. This Shewanella oneidensis (strain ATCC 700550 / JCM 31522 / CIP 106686 / LMG 19005 / NCIMB 14063 / MR-1) protein is Fatty acid oxidation complex subunit alpha.